The sequence spans 454 residues: Notoamide biosynthesis cluster protein M' (454 aa).

N51 and N74 each carry an N-linked (GlcNAc...) asparagine glycan. Residues 205–219 (KARSKEKKPKRKKSK) show a composition bias toward basic residues. The segment at 205 to 224 (KARSKEKKPKRKKSKAEKEH) is disordered. 2 helical membrane-spanning segments follow: residues 334 to 354 (MTTVAFVSMVYLPGTFVSGLF) and 375 to 395 (FWMYWAVTIPLTLLTLGVWGV).

The protein localises to the membrane. Its function is as follows. Part of the gene cluster that mediates the biosynthesis of notoamide, a fungal indole alkaloid that belongs to a family of natural products containing a characteristic bicyclo[2.2.2]diazaoctane core. The first step of notoamide biosynthesis involves coupling of L-proline and L-tryptophan by the bimodular NRPS notE', to produce cyclo-L-tryptophan-L-proline called brevianamide F. The reverse prenyltransferase notF' then acts as a deoxybrevianamide E synthase and converts brevianamide F to deoxybrevianamide E via reverse prenylation at C-2 of the indole ring leading to the bicyclo[2.2.2]diazaoctane core. Deoxybrevianamide E is further hydroxylated at C-6 of the indole ring, likely catalyzed by the cytochrome P450 monooxygenase notG', to yield 6-hydroxy-deoxybrevianamide E. 6-hydroxy-deoxybrevianamide E is a specific substrate of the prenyltransferase notC' for normal prenylation at C-7 to produce 6-hydroxy-7-prenyl-deoxybrevianamide, also called notoamide S. As the proposed pivotal branching point in notoamide biosynthesis, notoamide S can be diverted to notoamide E through an oxidative pyran ring closure putatively catalyzed by either notH' cytochrome P450 monooxygenase or the notD' FAD-linked oxidoreductase. This step would be followed by an indole 2,3-epoxidation-initiated pinacol-like rearrangement catalyzed by the notB' FAD-dependent monooxygenase leading to the formation of notoamide C and notoamide D. On the other hand notoamide S is converted to notoamide T by notH' (or notD'), a bifunctional oxidase that also functions as the intramolecular Diels-Alderase responsible for generation of (-)-notoamide T. To generate antipodal (+)-notoaminide T, notH (or notD) in Aspergillus strain MF297-2 is expected to catalyze a Diels-Alder reaction leading to the opposite stereochemistry. The remaining oxidoreductase notD' (or notH') likely catalyzes the oxidative pyran ring formation to yield (-)-stephacidin A. The FAD-dependent monooxygenase notI' is highly similar to notB' and is predicted to catalyze a similar conversion from (-)-stephacidin A to (+)-notoamide B via the 2,3-epoxidation of (-)-stephacidin A followed by a pinacol-type rearrangement. Finally, it remains unclear which enzyme could be responsible for the final hydroxylation steps leading to notoamide A and sclerotiamide. The function of notM' in the notoamide biosynthesis has not been determined yet. This chain is Notoamide biosynthesis cluster protein M', found in Aspergillus versicolor.